Reading from the N-terminus, the 177-residue chain is Peptide methionine sulfoxide reductase MsrA (177 aa).

Residue Cys-15 is part of the active site.

This sequence belongs to the MsrA Met sulfoxide reductase family.

It catalyses the reaction L-methionyl-[protein] + [thioredoxin]-disulfide + H2O = L-methionyl-(S)-S-oxide-[protein] + [thioredoxin]-dithiol. The enzyme catalyses [thioredoxin]-disulfide + L-methionine + H2O = L-methionine (S)-S-oxide + [thioredoxin]-dithiol. Functionally, has an important function as a repair enzyme for proteins that have been inactivated by oxidation. Catalyzes the reversible oxidation-reduction of methionine sulfoxide in proteins to methionine. The chain is Peptide methionine sulfoxide reductase MsrA from Listeria innocua serovar 6a (strain ATCC BAA-680 / CLIP 11262).